A 959-amino-acid chain; its full sequence is General vesicular transport factor p115 (959 aa).

The globular head stretch occupies residues 1-637; it reads MNFLRGVMGG…IYKSSEEDKK (637 aa). 12 ARM repeats span residues 20 to 60, 61 to 121, 123 to 163, 166 to 207, 208 to 253, 255 to 310, 311 to 354, 363 to 408, 420 to 459, 473 to 513, 518 to 571, and 573 to 630; these read AETI…VGIQ, AMEH…IKQP, NVTL…IILV, MGVS…VAFE, NAFE…FKEG, YIQR…MFQC, GLLQ…FASV, PAIV…ATLL, SAGQLLCGGLFSTDSLSNWCAAVALAHALQGNATQKEQLL, SLLQ…THFL, NVPF…IEKR, and GKEN…AIYK. Serine 50 carries the phosphoserine modification. At lysine 202 the chain carries N6-acetyllysine. Positions 638-930 form a coiled coil; the sequence is EEEVKKTLEQ…LSLKSKLKDL (293 aa). A disordered region spans residues 925-959; that stretch reads SKLKDLGHPVEEEDESGDQEDDDDELDDGDRDQDI. Residues 935–959 are compositionally biased toward acidic residues; the sequence is EEEDESGDQEDDDDELDDGDRDQDI. Serine 940 carries the post-translational modification Phosphoserine.

Belongs to the VDP/USO1/EDE1 family. As to quaternary structure, homodimer. Dimerizes by parallel association of the tails, resulting in an elongated structure with two globular head domains side by side, and a long rod-like tail structure. Interacts with MIF. Interacts with GM130/GOLGA2; interaction is disrupted upon phosphorylation of GM130/GOLGA2 by CDK1 at the onset of mitosis. In terms of processing, phosphorylated in a cell cycle-specific manner; phosphorylated in interphase but not in mitotic cells. Dephosphorylated protein associates with the Golgi membrane; phosphorylation promostes dissociation.

It is found in the cytoplasm. It localises to the cytosol. Its subcellular location is the golgi apparatus membrane. Its function is as follows. General vesicular transport factor required for intercisternal transport in the Golgi stack; it is required for transcytotic fusion and/or subsequent binding of the vesicles to the target membrane. May well act as a vesicular anchor by interacting with the target membrane and holding the vesicular and target membranes in proximity. The protein is General vesicular transport factor p115 (Uso1) of Rattus norvegicus (Rat).